The following is a 262-amino-acid chain: Demethyldecarbamoylnovobiocin O-methyltransferase (262 aa).

64–65 (TM) serves as a coordination point for S-adenosyl-L-methionine. Glu-72 acts as the Proton acceptor in catalysis. Residues 92–96 (ETGVW), 122–126 (DSFQG), Phe-178, 196–197 (DG), and Ser-202 each bind S-adenosyl-L-methionine. Mg(2+) is bound at residue Asp-196. Mg(2+) contacts are provided by Asp-223 and Asp-224.

It belongs to the methyltransferase TylF/MycF family. In terms of assembly, homodimer. Mg(2+) serves as cofactor.

It carries out the reaction desmethyldescarbamoylnovobiocin + S-adenosyl-L-methionine = descarbamoylnovobiocin + S-adenosyl-L-homocysteine + H(+). It functions in the pathway antibiotic biosynthesis; novobiocin biosynthesis. Its function is as follows. S-adenosyl-L-methionine-dependent O-methyltransferase that methylates at 4-OH of the noviose moiety, the penultimate step in the novobiocin biosynthesis pathway. Novobiocin is an aminocoumarin family antibiotic that targets bacterial DNA gyrases. The chain is Demethyldecarbamoylnovobiocin O-methyltransferase (novP) from Streptomyces niveus (Streptomyces spheroides).